The primary structure comprises 144 residues: Glutamyl-tRNA(Gln) amidotransferase subunit C, mitochondrial (144 aa).

The N-terminal 17 residues, 1–17 (MFRRSVSFVRSHVLRSF), are a transit peptide targeting the mitochondrion.

The protein belongs to the GatC family. Subunit of the heterotrimeric GatCAB amidotransferase (AdT) complex, composed of A, B and C subunits.

The protein resides in the mitochondrion. The catalysed reaction is L-glutamyl-tRNA(Gln) + L-glutamine + ATP + H2O = L-glutaminyl-tRNA(Gln) + L-glutamate + ADP + phosphate + H(+). Functionally, allows the formation of correctly charged Gln-tRNA(Gln) through the transamidation of misacylated Glu-tRNA(Gln) in the mitochondria. The reaction takes place in the presence of glutamine and ATP through an activated gamma-phospho-Glu-tRNA(Gln). This chain is Glutamyl-tRNA(Gln) amidotransferase subunit C, mitochondrial, found in Ixodes scapularis (Black-legged tick).